We begin with the raw amino-acid sequence, 150 residues long: Large ribosomal subunit protein uL15 (150 aa).

A compositionally biased stretch (basic and acidic residues) spans M1–R13. Positions M1–K44 are disordered.

It belongs to the universal ribosomal protein uL15 family. In terms of assembly, part of the 50S ribosomal subunit.

Binds to the 23S rRNA. This Micrococcus luteus (strain ATCC 4698 / DSM 20030 / JCM 1464 / CCM 169 / CCUG 5858 / IAM 1056 / NBRC 3333 / NCIMB 9278 / NCTC 2665 / VKM Ac-2230) (Micrococcus lysodeikticus) protein is Large ribosomal subunit protein uL15.